The following is a 907-amino-acid chain: NADH-quinone oxidoreductase subunit G (907 aa).

The 2Fe-2S ferredoxin-type domain occupies M1–I83. Residues C34, C45, C48, and C67 each contribute to the [2Fe-2S] cluster site. A 4Fe-4S His(Cys)3-ligated-type domain is found at I83–G122. H99, C103, C106, C112, C151, C154, C157, C201, C228, C231, C235, and C263 together coordinate [4Fe-4S] cluster. The 4Fe-4S Mo/W bis-MGD-type domain occupies M221–E277.

It belongs to the complex I 75 kDa subunit family. As to quaternary structure, composed of 13 different subunits. Subunits NuoCD, E, F, and G constitute the peripheral sector of the complex. [2Fe-2S] cluster is required as a cofactor. It depends on [4Fe-4S] cluster as a cofactor.

It carries out the reaction a quinone + NADH + 5 H(+)(in) = a quinol + NAD(+) + 4 H(+)(out). Its function is as follows. NDH-1 shuttles electrons from NADH, via FMN and iron-sulfur (Fe-S) centers, to quinones in the respiratory chain. Couples the redox reaction to proton translocation (for every two electrons transferred, four hydrogen ions are translocated across the cytoplasmic membrane), and thus conserves the redox energy in a proton gradient. The chain is NADH-quinone oxidoreductase subunit G (nuoG) from Buchnera aphidicola subsp. Baizongia pistaciae (strain Bp).